We begin with the raw amino-acid sequence, 610 residues long: E-selectin (610 aa).

An N-terminal signal peptide occupies residues 1–21; that stretch reads MIASQFLSALTLVLLIKESGA. The region spanning 22–139 is the C-type lectin domain; it reads WSYNTSTEAM…CSKKKLALCY (118 aa). Residues 22–556 are Extracellular-facing; that stretch reads WSYNTSTEAM…CEAPTESNIP (535 aa). N25 is a glycosylation site (N-linked (GlcNAc...) asparagine). Disulfide bonds link C40/C138, C111/C130, C143/C154, C148/C163, and C165/C174. Ca(2+)-binding residues include E101, N103, and E109. A carbohydrate-binding positions include 101 to 109, 113 to 118, and 126 to 128; these read EPNNRQKDE, EIYIKR, and NDE. Ca(2+)-binding residues include N126 and D127. An EGF-like domain is found at 140–175; that stretch reads TAACTNTSCSGHGECVETINNYTCKCDPGFSGLKCE. N-linked (GlcNAc...) asparagine glycosylation is found at N145 and N160. Sushi domains are found at residues 178-239, 240-301, 303-364, 366-427, 429-490, and 491-549; these read VNCT…ACNV, VECD…TCKA, TCRA…VCEA, QCTA…TCEA, RCDA…SCQV, and VKCS…TCEA. N179, N199, and N203 each carry an N-linked (GlcNAc...) asparagine glycan. 14 disulfide bridges follow: C180/C224, C193/C206, C210/C237, C242/C286, C255/C268, C272/C299, C304/C349, C335/C362, C367/C412, C398/C425, C430/C475, C461/C488, C493/C534, and C520/C547. N265 carries N-linked (GlcNAc...) asparagine glycosylation. N312 and N332 each carry an N-linked (GlcNAc...) asparagine glycan. 2 N-linked (GlcNAc...) asparagine glycosylation sites follow: N503 and N527. Residues 557 to 578 traverse the membrane as a helical segment; sequence LVAGLSAAGLSLLTLAPFLLWL. Topologically, residues 579–610 are cytoplasmic; the sequence is RKCLRKAKKFVPASSCQSLESDGSYQKPSYIL.

This sequence belongs to the selectin/LECAM family. As to quaternary structure, interacts with SELPLG/PSGL1 and PODXL2 through the sialyl Lewis X epitope. SELPLG sulfation appears not to be required for this interaction.

It is found in the cell membrane. Functionally, cell-surface glycoprotein having a role in immunoadhesion. Mediates in the adhesion of blood neutrophils in cytokine-activated endothelium through interaction with SELPLG/PSGL1. May have a role in capillary morphogenesis. The sequence is that of E-selectin (SELE) from Homo sapiens (Human).